Reading from the N-terminus, the 211-residue chain is DNA/RNA-binding protein ALBA2 (211 aa).

Basic and acidic residues predominate over residues 84 to 99 (NSGLKKNAKNEDKKSG). Positions 84–121 (NSGLKKNAKNEDKKSGDEEEEEEEEEEDEENNKNKEAN) are disordered. Acidic residues predominate over residues 100–113 (DEEEEEEEEEEDEE).

This sequence belongs to the histone-like Alba family. Identified in a TARE6-associated complex consisting of over 30 proteins and including ALBA1, ALBA2 and ALBA4; the complex binds to the non-coding subtelomeric repeat region TARE6.

It localises to the nucleus. It is found in the chromosome. Its subcellular location is the telomere. The protein localises to the cytoplasm. In terms of biological role, possesses DNA- and RNA-binding activities. Binds to DNA with relaxed sequence specificity. Associates with the subtelomeric TARE6 repeats. The protein is DNA/RNA-binding protein ALBA2 of Plasmodium falciparum (isolate 3D7).